The primary structure comprises 203 residues: uncharacterized protein (203 aa).

This is an uncharacterized protein from Methanocaldococcus jannaschii (strain ATCC 43067 / DSM 2661 / JAL-1 / JCM 10045 / NBRC 100440) (Methanococcus jannaschii).